Here is a 308-residue protein sequence, read N- to C-terminus: Cytochrome b (308 aa).

4 helical membrane-spanning segments follow: residues 1–21 (SGSLLGMCLIVRIITGLFLAA), 45–66 (WLIRNLHANGASLFFICIYLHI), 81–101 (WNIGVILLLALMATAFVGYVL), and 146–166 (FFALHFLLPFVIAGLTLVHLT). Residues H51 and H65 each contribute to the heme b site. Residues H150 and H164 each contribute to the heme b site. A ubiquinone is bound at residue H169. 3 helical membrane-spanning segments follow: residues 194–214 (TKDVLGFALLLTPLIALALFS), 256–276 (LGGVLALAASVLVLFLIPLLH), and 288–308 (LSQILFWALVANLLVLTWVGS).

It belongs to the cytochrome b family. The cytochrome bc1 complex contains 11 subunits: 3 respiratory subunits (MT-CYB, CYC1 and UQCRFS1), 2 core proteins (UQCRC1 and UQCRC2) and 6 low-molecular weight proteins (UQCRH/QCR6, UQCRB/QCR7, UQCRQ/QCR8, UQCR10/QCR9, UQCR11/QCR10 and a cleavage product of UQCRFS1). This cytochrome bc1 complex then forms a dimer. Heme b is required as a cofactor.

Its subcellular location is the mitochondrion inner membrane. Its function is as follows. Component of the ubiquinol-cytochrome c reductase complex (complex III or cytochrome b-c1 complex) that is part of the mitochondrial respiratory chain. The b-c1 complex mediates electron transfer from ubiquinol to cytochrome c. Contributes to the generation of a proton gradient across the mitochondrial membrane that is then used for ATP synthesis. The sequence is that of Cytochrome b (MT-CYB) from Garritornis isidorei (Papuan babbler).